The primary structure comprises 233 residues: Nucleoside diphosphate kinase 2, chloroplastic (233 aa).

Residues 1 to 67 constitute a chloroplast transit peptide; the sequence is MEAMSGLSSP…LISHSLPRKK (67 aa). ATP-binding residues include lysine 93, phenylalanine 141, arginine 169, threonine 175, arginine 186, and asparagine 196. Histidine 199 acts as the Pros-phosphohistidine intermediate in catalysis.

This sequence belongs to the NDK family. Requires Mg(2+) as cofactor.

It localises to the plastid. It is found in the chloroplast. It carries out the reaction a 2'-deoxyribonucleoside 5'-diphosphate + ATP = a 2'-deoxyribonucleoside 5'-triphosphate + ADP. It catalyses the reaction a ribonucleoside 5'-diphosphate + ATP = a ribonucleoside 5'-triphosphate + ADP. Functionally, major role in the synthesis of nucleoside triphosphates other than ATP. The ATP gamma phosphate is transferred to the NDP beta phosphate via a ping-pong mechanism, using a phosphorylated active-site intermediate. In Spinacia oleracea (Spinach), this protein is Nucleoside diphosphate kinase 2, chloroplastic (NDPK2).